A 638-amino-acid chain; its full sequence is Chaperone protein HtpG (638 aa).

The a; substrate-binding stretch occupies residues 1 to 346 (MSQQETHGFQ…SNDLPLNVSR (346 aa)). The b stretch occupies residues 347 to 563 (EILQDNKVTT…EGEMSTQMIK (217 aa)). A c region spans residues 564–638 (LMEAAGQAVP…MNEMLLAKLK (75 aa)).

The protein belongs to the heat shock protein 90 family. As to quaternary structure, homodimer.

It is found in the cytoplasm. Molecular chaperone. Has ATPase activity. This is Chaperone protein HtpG from Shewanella sediminis (strain HAW-EB3).